Consider the following 158-residue polypeptide: MKAYMYDNQPGDQRLPHDSGRAISTEALGKLGVLYFHFANIADVDRLAADRGYKNRDEITVSPEKMGGMYEDKVKMFFNEHLHEDEEIRYIKGGQGFFDVRSKDDNWVRVRLEKDDLLILPAGIYHRFTTDEANVPVPRIVRTCHEALQGRAQMDAIE.

Histidine 81, histidine 83, glutamate 87, and histidine 126 together coordinate Fe(2+). Residues histidine 81, histidine 83, glutamate 87, and histidine 126 each coordinate Ni(2+).

Belongs to the acireductone dioxygenase (ARD) family. It depends on Fe(2+) as a cofactor. Ni(2+) is required as a cofactor.

It localises to the cytoplasm. It is found in the nucleus. The enzyme catalyses 1,2-dihydroxy-5-(methylsulfanyl)pent-1-en-3-one + O2 = 4-methylsulfanyl-2-oxobutanoate + formate + 2 H(+). It catalyses the reaction 1,2-dihydroxy-5-(methylsulfanyl)pent-1-en-3-one + O2 = 3-(methylsulfanyl)propanoate + CO + formate + 2 H(+). It participates in amino-acid biosynthesis; L-methionine biosynthesis via salvage pathway; L-methionine from S-methyl-5-thio-alpha-D-ribose 1-phosphate: step 5/6. Functionally, catalyzes 2 different reactions between oxygen and the acireductone 1,2-dihydroxy-3-keto-5-methylthiopentene (DHK-MTPene) depending upon the metal bound in the active site. Fe-containing acireductone dioxygenase (Fe-ARD) produces formate and 2-keto-4-methylthiobutyrate (KMTB), the alpha-ketoacid precursor of methionine in the methionine recycle pathway. Ni-containing acireductone dioxygenase (Ni-ARD) produces methylthiopropionate, carbon monoxide and formate, and does not lie on the methionine recycle pathway. The chain is Acireductone dioxygenase from Metarhizium robertsii (strain ARSEF 23 / ATCC MYA-3075) (Metarhizium anisopliae (strain ARSEF 23)).